A 379-amino-acid polypeptide reads, in one-letter code: Queuine tRNA-ribosyltransferase (379 aa).

The active-site Proton acceptor is Asp94. Substrate-binding positions include 94 to 98, Asp148, Gln191, and Gly218; that span reads DSGGF. The interval 249-255 is RNA binding; sequence GVGSPDS. Residue Asp268 is the Nucleophile of the active site. Residues 273-277 form an RNA binding; important for wobble base 34 recognition region; sequence TRIAR. Zn(2+)-binding residues include Cys306, Cys308, Cys311, and His337.

Belongs to the queuine tRNA-ribosyltransferase family. As to quaternary structure, homodimer. Within each dimer, one monomer is responsible for RNA recognition and catalysis, while the other monomer binds to the replacement base PreQ1. The cofactor is Zn(2+).

It catalyses the reaction 7-aminomethyl-7-carbaguanine + guanosine(34) in tRNA = 7-aminomethyl-7-carbaguanosine(34) in tRNA + guanine. The protein operates within tRNA modification; tRNA-queuosine biosynthesis. Functionally, catalyzes the base-exchange of a guanine (G) residue with the queuine precursor 7-aminomethyl-7-deazaguanine (PreQ1) at position 34 (anticodon wobble position) in tRNAs with GU(N) anticodons (tRNA-Asp, -Asn, -His and -Tyr). Catalysis occurs through a double-displacement mechanism. The nucleophile active site attacks the C1' of nucleotide 34 to detach the guanine base from the RNA, forming a covalent enzyme-RNA intermediate. The proton acceptor active site deprotonates the incoming PreQ1, allowing a nucleophilic attack on the C1' of the ribose to form the product. After dissociation, two additional enzymatic reactions on the tRNA convert PreQ1 to queuine (Q), resulting in the hypermodified nucleoside queuosine (7-(((4,5-cis-dihydroxy-2-cyclopenten-1-yl)amino)methyl)-7-deazaguanosine). The polypeptide is Queuine tRNA-ribosyltransferase (Listeria welshimeri serovar 6b (strain ATCC 35897 / DSM 20650 / CCUG 15529 / CIP 8149 / NCTC 11857 / SLCC 5334 / V8)).